A 478-amino-acid chain; its full sequence is Sulfate adenylyltransferase subunit 1 (478 aa).

Residues 24 to 240 form the tr-type G domain; it reads KSLLRFLTCG…VLENVDIDAD (217 aa). The G1 stretch occupies residues 33 to 40; that stretch reads GSVDDGKS. 33 to 40 provides a ligand contact to GTP; the sequence is GSVDDGKS. The segment at 91–95 is G2; that stretch reads GITID. The interval 112 to 115 is G3; that stretch reads DTPG. Residues 112-116 and 167-170 contribute to the GTP site; these read DTPGH and NKMD. The G4 stretch occupies residues 167 to 170; it reads NKMD. The segment at 206–208 is G5; it reads SAL.

This sequence belongs to the TRAFAC class translation factor GTPase superfamily. Classic translation factor GTPase family. CysN/NodQ subfamily. In terms of assembly, heterodimer composed of CysD, the smaller subunit, and CysN.

The enzyme catalyses sulfate + ATP + H(+) = adenosine 5'-phosphosulfate + diphosphate. The protein operates within sulfur metabolism; hydrogen sulfide biosynthesis; sulfite from sulfate: step 1/3. With CysD forms the ATP sulfurylase (ATPS) that catalyzes the adenylation of sulfate producing adenosine 5'-phosphosulfate (APS) and diphosphate, the first enzymatic step in sulfur assimilation pathway. APS synthesis involves the formation of a high-energy phosphoric-sulfuric acid anhydride bond driven by GTP hydrolysis by CysN coupled to ATP hydrolysis by CysD. This is Sulfate adenylyltransferase subunit 1 from Aliivibrio fischeri (strain MJ11) (Vibrio fischeri).